A 644-amino-acid chain; its full sequence is MQVADSEGWSIQDSAALYGLDRWGEPYFTINGRGHISVQPQGERGGSLDLVELVSELRGRNLGLPLLIRFDDILEDRLERLHAAFERAIAQYSYTGRYQGVFPVKCNQQRHVVEELVICGKRWNFGLEAGSKAELLIALSLLDDPEALLICNGYKDRLYIETAILARRLGRQPVVVIEQPDEVDRIIEASKSLGAAPYIGVRAKLSSRSTGRWGSSVGDKAKFGLSIPELLATVERLRESNLLPDLRLLHFHIGSQINDIAVLKDALQEAGQIYVELTRLGAPMGFLDVGGGLGIDYDGSRTASAASTNYSLQNYANDVVATVRECCEPNAVAVPTLVSESGRAIASHFSLLVFDVLGSSALSASIPNASGDEPLTVRNLRDTLVTIQELSGTADAQLVRLQEAWNDALKFKQDALAAFRLGYMGLPDRASAEQLTWACADAIAQRLPKEQAIPEELAALSKALAGTYYANLSIFRSAPDTWAIDQLFPVVPIQKLNQRPTRLANLADLTCDSDGRLDRFIGDGQPKQLLELHELDDNNPYLIGLFLSGAYQEVMGNLHNLFGTTNAVHIRLSPGGSYRIDHVVRGDTNADVLEAMEHDPRVLLERLRVAAEAAINDGQLRIDESRRLLDHLESSLRQTTYLQD.

At Lys-105 the chain carries N6-(pyridoxal phosphate)lysine. 287-297 (LDVGGGLGIDY) serves as a coordination point for substrate.

The protein belongs to the Orn/Lys/Arg decarboxylase class-II family. SpeA subfamily. The cofactor is Mg(2+). Requires pyridoxal 5'-phosphate as cofactor.

It carries out the reaction L-arginine + H(+) = agmatine + CO2. In terms of biological role, catalyzes the biosynthesis of agmatine from arginine. The polypeptide is Biosynthetic arginine decarboxylase (Parasynechococcus marenigrum (strain WH8102)).